The following is a 553-amino-acid chain: ATP synthase F(1) complex subunit alpha, mitochondrial (553 aa).

The N-terminal 43 residues, 1–43, are a transit peptide targeting the mitochondrion; sequence MLSVRVAAAVARALPRRAGLVSKNALGSSFVGARNLHASNTRL. Residues S53 and S65 each carry the phosphoserine modification. Residue S76 is modified to Phosphoserine; alternate. An O-linked (GlcNAc) serine; alternate glycan is attached at S76. Position 106 is a phosphoserine (S106). N6-acetyllysine occurs at positions 123, 126, and 132. T134 carries the phosphothreonine modification. K161 bears the N6-acetyllysine; alternate mark. K161 is subject to N6-succinyllysine; alternate. The residue at position 166 (S166) is a Phosphoserine. Position 167 is an N6-acetyllysine; alternate (K167). K167 carries the N6-succinyllysine; alternate modification. S184 is modified (phosphoserine). At R204 the chain carries Omega-N-methylarginine. 5 residues coordinate ATP: Q215, G217, K218, T219, and S220. T219 contributes to the Mg(2+) binding site. An N6-acetyllysine; alternate mark is found at K230 and K239. N6-succinyllysine; alternate is present on residues K230 and K239. N6-acetyllysine is present on K240. 2 positions are modified to N6-acetyllysine; alternate: K261 and K305. N6-succinyllysine; alternate occurs at positions 261 and 305. Residue D312 coordinates Mg(2+). K427 is subject to N6-acetyllysine; alternate. K427 bears the N6-succinyllysine; alternate mark. At K434 the chain carries N6-acetyllysine. ATP is bound by residues Q473 and Q475. 2 positions are modified to N6-acetyllysine; alternate: K498 and K506. K498 and K506 each carry N6-succinyllysine; alternate. S521 is modified (phosphoserine). N6-acetyllysine; alternate occurs at positions 531 and 539. N6-succinyllysine; alternate occurs at positions 531 and 539. An N6-acetyllysine modification is found at K541.

This sequence belongs to the ATPase alpha/beta chains family. Homotrimer. Component of the ATP synthase complex composed at least of ATP5F1A/subunit alpha, ATP5F1B/subunit beta, ATP5MC1/subunit c (homooctomer), MT-ATP6/subunit a, MT-ATP8/subunit 8, ATP5ME/subunit e, ATP5MF/subunit f, ATP5MG/subunit g, ATP5MK/subunit k, ATP5MJ/subunit j, ATP5F1C/subunit gamma, ATP5F1D/subunit delta, ATP5F1E/subunit epsilon, ATP5PF/subunit F6, ATP5PB/subunit b, ATP5PD/subunit d, ATP5PO/subunit OSCP. ATP synthase complex consists of a soluble F(1) head domain (subunits alpha(3) and beta(3)) - the catalytic core - and a membrane F(0) domain - the membrane proton channel (subunits c, a, 8, e, f, g, k and j). These two domains are linked by a central stalk (subunits gamma, delta, and epsilon) rotating inside the F1 region and a stationary peripheral stalk (subunits F6, b, d, and OSCP). Interacts with ATPAF2. Interacts with HRG; the interaction occurs on the surface of T-cells and alters the cell morphology when associated with concanavalin (in vitro). Interacts with PLG (angiostatin peptide); the interaction inhibits most of the angiogenic properties of angiostatin. Interacts with BLOC1S1. Interacts with BCL2L1 isoform BCL-X(L); the interaction mediates the association of BCL2L1 isoform BCL-X(L) with the mitochondrial membrane F(1)F(0) ATP synthase and enhances neurons metabolic efficiency. Interacts with CLN5 and PPT1. Interacts with S100A1; this interaction increases F1-ATPase activity. Interacts with ABCB7; this interaction allows the regulation of cellular iron homeostasis and cellular reactive oxygen species (ROS) levels in cardiomyocytes. Post-translationally, acetylated on lysine residues. BLOC1S1 is required for acetylation. Acetylation of Lys-132, Lys-230 and Lys-498 is observed in liver mitochondria from fasted mice but not from fed mice.

It is found in the mitochondrion inner membrane. The protein resides in the cell membrane. Subunit alpha, of the mitochondrial membrane ATP synthase complex (F(1)F(0) ATP synthase or Complex V) that produces ATP from ADP in the presence of a proton gradient across the membrane which is generated by electron transport complexes of the respiratory chain. ATP synthase complex consist of a soluble F(1) head domain - the catalytic core - and a membrane F(1) domain - the membrane proton channel. These two domains are linked by a central stalk rotating inside the F(1) region and a stationary peripheral stalk. During catalysis, ATP synthesis in the catalytic domain of F(1) is coupled via a rotary mechanism of the central stalk subunits to proton translocation. In vivo, can only synthesize ATP although its ATP hydrolase activity can be activated artificially in vitro. With the catalytic subunit beta (ATP5F1B), forms the catalytic core in the F(1) domain. Subunit alpha does not bear the catalytic high-affinity ATP-binding sites. The sequence is that of ATP synthase F(1) complex subunit alpha, mitochondrial from Mus musculus (Mouse).